A 561-amino-acid polypeptide reads, in one-letter code: SUN domain-containing protein 5 (561 aa).

The chain crosses the membrane as a helical span at residues 36-56 (GSFFERSISLVLLLWCFLFLV). The SUN domain maps to 158–318 (NGSSQLVNNG…SVVEVFGIDA (161 aa)). A disordered region spans residues 345–367 (ADEKQDGEIKSNRTDQIGKETEA). A coiled-coil region spans residues 454-499 (MEKELRDLELWKTLVASRVESLARGNSALRLDVEKIVKEQANLESK). Transmembrane regions (helical) follow at residues 501–521 (LGVL…LVST) and 540–560 (PDSG…IHLL).

In terms of assembly, forms homomers. Interacts with SUN3 and TIK.

It localises to the membrane. Encodes a member of the mid-SUN subfamily of SUN-domain proteins. It is involved in early seed development and nuclear morphology. [TAIR]. The polypeptide is SUN domain-containing protein 5 (Arabidopsis thaliana (Mouse-ear cress)).